Here is a 319-residue protein sequence, read N- to C-terminus: L-lactate dehydrogenase 2 (319 aa).

Residues Val-16, Asp-37, Lys-42, Tyr-68, and 82–83 (GA) contribute to the NAD(+) site. Substrate contacts are provided by Gln-85 and Arg-91. Residues Ser-104, 121–123 (AAN), and Ser-146 contribute to the NAD(+) site. 123–126 (NPVD) is a substrate binding site. Residue 151 to 154 (DSAR) coordinates substrate. Residue His-178 is the Proton acceptor of the active site. Phosphotyrosine is present on Tyr-222. Substrate is bound at residue Thr-231.

This sequence belongs to the LDH/MDH superfamily. LDH family. As to quaternary structure, homotetramer.

The protein resides in the cytoplasm. It catalyses the reaction (S)-lactate + NAD(+) = pyruvate + NADH + H(+). It participates in fermentation; pyruvate fermentation to lactate; (S)-lactate from pyruvate: step 1/1. Catalyzes the conversion of lactate to pyruvate (Potential). Contributes to S.aureus growth during nitrosative stress in both aerobically and anaerobically cultured cells, despite playing a secondary role in this resistance mechanism. The sequence is that of L-lactate dehydrogenase 2 from Staphylococcus aureus (strain USA300).